The sequence spans 227 residues: Nodulation protein W (227 aa).

Residues 21 to 135 (IVFVVEDDIS…ELLDAVVAAT (115 aa)) enclose the Response regulatory domain. Residue aspartate 70 is modified to 4-aspartylphosphate. One can recognise an HTH luxR-type domain in the interval 151-216 (LKSLFETLSP…DLIRMSETLG (66 aa)). Residues 175 to 194 (NKQVAAELGLAEITVKIYRG) constitute a DNA-binding region (H-T-H motif).

In terms of processing, phosphorylated by NodV.

Its subcellular location is the cytoplasm. Its function is as follows. Member of the two-component regulatory system NodV/NodW probably involved in the regulation of the transcription of genes involved in the nodulation process. The chain is Nodulation protein W (nodW) from Bradyrhizobium diazoefficiens (strain JCM 10833 / BCRC 13528 / IAM 13628 / NBRC 14792 / USDA 110).